We begin with the raw amino-acid sequence, 216 residues long: Probable nicotinate-nucleotide adenylyltransferase (216 aa).

The protein belongs to the NadD family.

The enzyme catalyses nicotinate beta-D-ribonucleotide + ATP + H(+) = deamido-NAD(+) + diphosphate. Its pathway is cofactor biosynthesis; NAD(+) biosynthesis; deamido-NAD(+) from nicotinate D-ribonucleotide: step 1/1. Catalyzes the reversible adenylation of nicotinate mononucleotide (NaMN) to nicotinic acid adenine dinucleotide (NaAD). The polypeptide is Probable nicotinate-nucleotide adenylyltransferase (Shewanella pealeana (strain ATCC 700345 / ANG-SQ1)).